The chain runs to 283 residues: Movement protein (283 aa).

This sequence belongs to the tenuiviruses pc4 protein family.

Functionally, transports viral genome to neighboring plant cells directly through plasmosdesmata, without any budding. The movement protein allows efficient cell to cell propagation, by bypassing the host cell wall barrier. This chain is Movement protein, found in Maize stripe virus (MStV).